The chain runs to 428 residues: GTPase Obg (428 aa).

The Obg domain occupies 1 to 158 (MFVDQVKIYV…RYVTLELKLL (158 aa)). Residues 159–329 (ADVGLVGFPS…LLFAIADLLE (171 aa)) enclose the OBG-type G domain. GTP is bound by residues 165–172 (GFPSVGKS), 190–194 (FTTIV), 212–215 (DLPG), 282–285 (NKMD), and 310–312 (SAV). Residues S172 and T192 each coordinate Mg(2+). An OCT domain is found at 350 to 428 (KLEKEEAPFH…LLNYEFEFVD (79 aa)).

This sequence belongs to the TRAFAC class OBG-HflX-like GTPase superfamily. OBG GTPase family. In terms of assembly, monomer. The cofactor is Mg(2+).

It localises to the cytoplasm. Functionally, an essential GTPase which binds GTP, GDP and possibly (p)ppGpp with moderate affinity, with high nucleotide exchange rates and a fairly low GTP hydrolysis rate. Plays a role in control of the cell cycle, stress response, ribosome biogenesis and in those bacteria that undergo differentiation, in morphogenesis control. The polypeptide is GTPase Obg (Anoxybacillus flavithermus (strain DSM 21510 / WK1)).